The primary structure comprises 205 residues: Small ribosomal subunit protein uS7 (205 aa).

The protein belongs to the universal ribosomal protein uS7 family. In terms of assembly, part of the 30S ribosomal subunit.

Functionally, one of the primary rRNA binding proteins, it binds directly to 16S rRNA where it nucleates assembly of the head domain of the 30S subunit. Is located at the subunit interface close to the decoding center. The polypeptide is Small ribosomal subunit protein uS7 (Aeropyrum pernix (strain ATCC 700893 / DSM 11879 / JCM 9820 / NBRC 100138 / K1)).